The sequence spans 258 residues: Tryptophan synthase alpha chain (258 aa).

Active-site proton acceptor residues include E52 and D63.

The protein belongs to the TrpA family. Tetramer of two alpha and two beta chains.

It carries out the reaction (1S,2R)-1-C-(indol-3-yl)glycerol 3-phosphate + L-serine = D-glyceraldehyde 3-phosphate + L-tryptophan + H2O. The protein operates within amino-acid biosynthesis; L-tryptophan biosynthesis; L-tryptophan from chorismate: step 5/5. Its function is as follows. The alpha subunit is responsible for the aldol cleavage of indoleglycerol phosphate to indole and glyceraldehyde 3-phosphate. The chain is Tryptophan synthase alpha chain from Streptococcus pneumoniae (strain JJA).